Consider the following 255-residue polypeptide: Ribonuclease HII (255 aa).

An RNase H type-2 domain is found at 70 to 255 (EYIAGVDEVG…FEPVKKILLK (186 aa)). Positions 76, 77, and 168 each coordinate a divalent metal cation.

It belongs to the RNase HII family. It depends on Mn(2+) as a cofactor. The cofactor is Mg(2+).

The protein resides in the cytoplasm. The catalysed reaction is Endonucleolytic cleavage to 5'-phosphomonoester.. Its function is as follows. Endonuclease that specifically degrades the RNA of RNA-DNA hybrids. The sequence is that of Ribonuclease HII from Ligilactobacillus salivarius (strain UCC118) (Lactobacillus salivarius).